The primary structure comprises 404 residues: LL-diaminopimelate aminotransferase (404 aa).

2 residues coordinate substrate: Tyr-15 and Gly-42. Pyridoxal 5'-phosphate contacts are provided by residues Tyr-72, 108-109, Tyr-132, Asn-188, Tyr-219, and 247-249; these read AK and SFS. The substrate site is built by Lys-109, Tyr-132, and Asn-188. N6-(pyridoxal phosphate)lysine is present on Lys-250. 2 residues coordinate pyridoxal 5'-phosphate: Arg-258 and Asn-288. Substrate-binding residues include Asn-288 and Arg-384.

This sequence belongs to the class-I pyridoxal-phosphate-dependent aminotransferase family. LL-diaminopimelate aminotransferase subfamily. Homodimer. Requires pyridoxal 5'-phosphate as cofactor.

The catalysed reaction is (2S,6S)-2,6-diaminopimelate + 2-oxoglutarate = (S)-2,3,4,5-tetrahydrodipicolinate + L-glutamate + H2O + H(+). It functions in the pathway amino-acid biosynthesis; L-lysine biosynthesis via DAP pathway; LL-2,6-diaminopimelate from (S)-tetrahydrodipicolinate (aminotransferase route): step 1/1. In terms of biological role, involved in the synthesis of meso-diaminopimelate (m-DAP or DL-DAP), required for both lysine and peptidoglycan biosynthesis. Catalyzes the direct conversion of tetrahydrodipicolinate to LL-diaminopimelate. The protein is LL-diaminopimelate aminotransferase of Lachnospira eligens (strain ATCC 27750 / DSM 3376 / VPI C15-48 / C15-B4) (Eubacterium eligens).